A 144-amino-acid polypeptide reads, in one-letter code: MNIQVINKSKHPLPAYATELSAGMDIRANISEPISLAPMQRCLVPTGLFIALPQGFEAQIRPRSGLALKKGITVLNSPGTIDADYRGEICIILVNLSAETFVIEDGERIAQMVIARHEQAVWKEVEVLDETERGAGGFGHTGRG.

Substrate contacts are provided by residues R63–G65, N76, and T80–D82.

The protein belongs to the dUTPase family. The cofactor is Mg(2+).

It catalyses the reaction dUTP + H2O = dUMP + diphosphate + H(+). The protein operates within pyrimidine metabolism; dUMP biosynthesis; dUMP from dCTP (dUTP route): step 2/2. Its function is as follows. This enzyme is involved in nucleotide metabolism: it produces dUMP, the immediate precursor of thymidine nucleotides and it decreases the intracellular concentration of dUTP so that uracil cannot be incorporated into DNA. This Bacteroides fragilis (strain YCH46) protein is Deoxyuridine 5'-triphosphate nucleotidohydrolase.